We begin with the raw amino-acid sequence, 249 residues long: Isoprenyl transferase (249 aa).

Residue Asp25 is part of the active site. Asp25 lines the Mg(2+) pocket. Residues Gly26 to Arg29, Trp30, Arg38, His42, and Ser70 to Glu72 contribute to the substrate site. Asn73 (proton acceptor) is an active-site residue. Residues Trp74, Arg76, Arg197, and Arg203–Ser205 contribute to the substrate site. Residue Glu216 coordinates Mg(2+).

It belongs to the UPP synthase family. Homodimer. The cofactor is Mg(2+).

Functionally, catalyzes the condensation of isopentenyl diphosphate (IPP) with allylic pyrophosphates generating different type of terpenoids. In Streptococcus pyogenes serotype M3 (strain ATCC BAA-595 / MGAS315), this protein is Isoprenyl transferase.